Consider the following 438-residue polypeptide: Enolase (438 aa).

Gln-163 lines the (2R)-2-phosphoglycerate pocket. Glu-205 functions as the Proton donor in the catalytic mechanism. Residues Asp-243, Glu-292, and Asp-319 each contribute to the Mg(2+) site. 4 residues coordinate (2R)-2-phosphoglycerate: Lys-344, Arg-373, Ser-374, and Lys-395. The active-site Proton acceptor is Lys-344.

It belongs to the enolase family. The cofactor is Mg(2+).

It localises to the cytoplasm. It is found in the secreted. The protein localises to the cell surface. The enzyme catalyses (2R)-2-phosphoglycerate = phosphoenolpyruvate + H2O. It participates in carbohydrate degradation; glycolysis; pyruvate from D-glyceraldehyde 3-phosphate: step 4/5. In terms of biological role, catalyzes the reversible conversion of 2-phosphoglycerate (2-PG) into phosphoenolpyruvate (PEP). It is essential for the degradation of carbohydrates via glycolysis. The protein is Enolase of Streptococcus agalactiae.